The following is a 325-amino-acid chain: Protease HtpX homolog (325 aa).

The helical transmembrane segment at 20 to 40 (IGYLLGGGGGMMIALVIAVAM) threads the bilayer. His-130 is a binding site for Zn(2+). Residue Glu-131 is part of the active site. His-134 provides a ligand contact to Zn(2+). The next 2 helical transmembrane spans lie at 145–165 (IVAT…FLGG) and 173–193 (VMGV…AMIV). Glu-202 contributes to the Zn(2+) binding site. The interval 288 to 325 (AMTARAAAPSQNSGPWGQRSDNAGGNSNGGSRYRGPWS) is disordered. Low complexity predominate over residues 306–325 (RSDNAGGNSNGGSRYRGPWS).

This sequence belongs to the peptidase M48B family. Zn(2+) is required as a cofactor.

The protein localises to the cell inner membrane. In Brucella abortus (strain S19), this protein is Protease HtpX homolog.